Consider the following 134-residue polypeptide: Interferon-induced transmembrane protein 5 (134 aa).

Over residues 1–20 (MDTSYPREDPRAPSSRKADA) the composition is skewed to basic and acidic residues. Positions 1–31 (MDTSYPREDPRAPSSRKADAAAHTALSMGTP) are disordered. Topologically, residues 1–39 (MDTSYPREDPRAPSSRKADAAAHTALSMGTPGPTPRDHM) are extracellular. The chain crosses the membrane as a helical span at residues 40-60 (LWSVFSTMYLNLCCLGFLALV). Residues cysteine 52, cysteine 53, and cysteine 86 are each lipidated (S-palmitoyl cysteine). Topologically, residues 61–88 (HSVKARDQKMAGNLEAARQYGSKAKCYN) are cytoplasmic. A helical membrane pass occupies residues 89 to 109 (ILAAMWTLVPPLLLLGLVVTG). Topologically, residues 110 to 134 (ALHLSKLAKDSAAFFSTKFDEEDYN) are extracellular.

This sequence belongs to the CD225/Dispanin family. In terms of assembly, interacts with FKBP11. Palmitoylated. As to expression, detected in embryonic bone (at protein level). Highly expressed in osteoblasts of adults and embryos. Expressed in primitive hemopoietic cells.

Its subcellular location is the cell membrane. Its function is as follows. Required for normal bone mineralization. This Mus musculus (Mouse) protein is Interferon-induced transmembrane protein 5 (Ifitm5).